The primary structure comprises 360 residues: Mediator of RNA polymerase II transcription subunit 6 (360 aa).

2 disordered regions span residues 186–238 (PAQP…NDPL) and 316–360 (AAAA…PGAA). Low complexity-rich tracts occupy residues 190–205 (SAGA…YTAS) and 316–325 (AAAAAANANA).

Belongs to the Mediator complex subunit 6 family. Component of the Mediator complex.

It is found in the nucleus. Component of the Mediator complex, a coactivator involved in the regulated transcription of nearly all RNA polymerase II-dependent genes. Mediator functions as a bridge to convey information from gene-specific regulatory proteins to the basal RNA polymerase II transcription machinery. Mediator is recruited to promoters by direct interactions with regulatory proteins and serves as a scaffold for the assembly of a functional preinitiation complex with RNA polymerase II and the general transcription factors. The chain is Mediator of RNA polymerase II transcription subunit 6 (med-6) from Neurospora crassa (strain ATCC 24698 / 74-OR23-1A / CBS 708.71 / DSM 1257 / FGSC 987).